The chain runs to 288 residues: Scolexin B (288 aa).

Positions Met-1–Ala-20 are cleaved as a signal peptide. Positions Ala-21 to Asn-287 constitute a Peptidase S1 domain. The interval Ile-27–Lys-56 is disordered. The cysteines at positions 72 and 88 are disulfide-linked. Residues His-87 and Asp-145 each act as charge relay system in the active site. Cystine bridges form between Cys-210-Cys-223 and Cys-235-Cys-264. Ser-239 serves as the catalytic Charge relay system.

Belongs to the peptidase S1 family.

The chain is Scolexin B from Heliothis virescens (Tobacco budworm moth).